The following is a 327-amino-acid chain: Ribosomal RNA small subunit methyltransferase H (327 aa).

Residues 36–38, Asp-61, Phe-88, Asp-114, and Gln-121 each bind S-adenosyl-L-methionine; that span reads GGH.

This sequence belongs to the methyltransferase superfamily. RsmH family.

Its subcellular location is the cytoplasm. The catalysed reaction is cytidine(1402) in 16S rRNA + S-adenosyl-L-methionine = N(4)-methylcytidine(1402) in 16S rRNA + S-adenosyl-L-homocysteine + H(+). In terms of biological role, specifically methylates the N4 position of cytidine in position 1402 (C1402) of 16S rRNA. The protein is Ribosomal RNA small subunit methyltransferase H of Chlorobium phaeovibrioides (strain DSM 265 / 1930) (Prosthecochloris vibrioformis (strain DSM 265)).